A 131-amino-acid polypeptide reads, in one-letter code: Probable ATP synthase subunit g 1, mitochondrial (131 aa).

This sequence belongs to the ATPase g subunit family. As to quaternary structure, subunit of the F-type ATPase which has 2 components, CF(1) - the catalytic core - and CF(0) - the membrane proton channel.

Its subcellular location is the mitochondrion membrane. Its function is as follows. Mitochondrial membrane ATP synthase (F(1)F(0) ATP synthase or Complex V) produces ATP from ADP in the presence of a proton gradient across the membrane which is generated by electron transport complexes of the respiratory chain. F-type ATPases consist of two structural domains, F(1) - containing the extramembraneous catalytic core, and F(0) - containing the membrane proton channel, linked together by a central stalk and a peripheral stalk. During catalysis, ATP synthesis in the catalytic domain of F(1) is coupled via a rotary mechanism of the central stalk subunits to proton translocation. Part of the complex F(0) domain. Minor subunit located with subunit a in the membrane. The protein is Probable ATP synthase subunit g 1, mitochondrial of Caenorhabditis elegans.